A 486-amino-acid polypeptide reads, in one-letter code: Arginine/agmatine antiporter (486 aa).

12 helical membrane-spanning segments follow: residues 12-32, 41-61, 85-105, 132-152, 160-180, 211-231, 242-262, 296-316, 341-361, 367-387, 418-438, and 461-481; these read LGAI…GIFS, AGVG…FFIA, GFGP…QIFG, PAIL…LKGI, IIGT…TAFL, STML…VMSA, ATIL…ILPF, VGLL…VAEI, VSLY…YFST, MLSI…AFLV, IWLI…LLAL, and EVTE…LFST.

This sequence belongs to the amino acid-polyamine-organocation (APC) superfamily. Basic amino acid/polyamine antiporter (APA) (TC 2.A.3.2) family.

It is found in the cell inner membrane. Functionally, catalyzes the exchange of L-arginine for agmatine. The arginine uptake by the bacterium in the macrophage may be a virulence factor against the host innate immune response. In Chlamydia abortus (strain DSM 27085 / S26/3) (Chlamydophila abortus), this protein is Arginine/agmatine antiporter (aaxC).